The primary structure comprises 1600 residues: A disintegrin and metalloproteinase with thrombospondin motifs 12 (1600 aa).

The N-terminal stretch at 1–25 is a signal peptide; the sequence is MPCARGSWLAKLSIVAQLINFGAFC. A propeptide spanning residues 26–244 is cleaved from the precursor; it reads HGRQTQPWPV…TLRSRSLSRR (219 aa). The N-linked (GlcNAc...) asparagine glycan is linked to asparagine 105. A Cysteine switch motif is present at residues 210 to 217; the sequence is PICGLKDS. Cysteine 212 lines the Zn(2+) pocket. In terms of domain architecture, Peptidase M12B spans 250-460; the sequence is RWVETLVVAD…GRGFCLDDIP (211 aa). Cystine bridges form between cysteine 326–cysteine 380, cysteine 355–cysteine 362, cysteine 374–cysteine 455, cysteine 413–cysteine 439, cysteine 482–cysteine 505, cysteine 493–cysteine 511, cysteine 500–cysteine 530, cysteine 524–cysteine 535, cysteine 558–cysteine 595, cysteine 562–cysteine 600, and cysteine 573–cysteine 585. A Zn(2+)-binding site is contributed by histidine 396. Glutamate 397 is an active-site residue. 2 residues coordinate Zn(2+): histidine 400 and histidine 406. The region spanning 469–548 is the Disintegrin domain; sequence VIAPGVIYDV…GKKPESIPGG (80 aa). 4 TSP type-1 domains span residues 546-601, 827-887, 891-947, and 948-1001; these read PGGW…HPCR, KLLY…KDCP, WAGE…RDIL, and CPSD…QQCP. The tract at residues 705–831 is spacer 1; the sequence is CQTVKKLFRQ…DNDVEKLLYF (127 aa). Residues 1001 to 1321 form a spacer 2 region; that stretch reads PFSRRVLKPN…HLMKDHSPAY (321 aa). 2 disordered regions span residues 1006-1140 and 1158-1179; these read VLKP…LSSS and PEVE…KDKS. Residues 1038-1047 are compositionally biased toward low complexity; it reads PTPLSTPTVP. Polar residues predominate over residues 1048–1107; it reads ESMSTSTPTINSLGSTIASQEDANGMGWQNNSTQAEEGSHFPTSSGSTSQVPVTSWSLSI. Low complexity predominate over residues 1130-1140; sequence TTTSDSGLSSS. 4 consecutive TSP type-1 domains span residues 1318–1371, 1373–1428, 1429–1477, and 1478–1538; these read SPAY…RPCA, WRVG…CNLE, PCGE…NRHL, and CCHW…QACR. The PLAC domain occupies 1541–1581; it reads ADLTCLKDRLSISFCQTLKSMRKCSVPSVRAQCCLSCPQAP.

As to quaternary structure, interacts with COMP. Zn(2+) is required as a cofactor. The precursor is cleaved by a furin endopeptidase. Post-translationally, subjected to an intracellular maturation process yielding a 120 kDa N-terminal fragment containing the metalloproteinase, disintegrin, one TSP type-1 and the Cys-rich domains and a 83 kDa C-terminal fragment containing the spacer 2 and four TSP type-1 domains. In terms of processing, glycosylated. Can be O-fucosylated by POFUT2 on a serine or a threonine residue found within the consensus sequence C1-X(2)-(S/T)-C2-G of the TSP type-1 repeat domains where C1 and C2 are the first and second cysteine residue of the repeat, respectively. Fucosylated repeats can then be further glycosylated by the addition of a beta-1,3-glucose residue by the glucosyltransferase, B3GALTL. Fucosylation mediates the efficient secretion of ADAMTS family members. Can also be C-glycosylated with one or two mannose molecules on tryptophan residues within the consensus sequence W-X-X-W of the TPRs, and N-glycosylated. These other glycosylations can also facilitate secretion.

It is found in the secreted. It localises to the extracellular space. The protein resides in the extracellular matrix. Inhibited by alpha-2 macroglobulin. Its function is as follows. Metalloprotease that plays a role in the degradation of COMP. Also cleaves alpha-2 macroglobulin and aggregan. Has anti-tumorigenic properties. In Mus musculus (Mouse), this protein is A disintegrin and metalloproteinase with thrombospondin motifs 12 (Adamts12).